The primary structure comprises 467 residues: Pancreatic lipase-related protein 3 (467 aa).

An N-terminal signal peptide occupies residues 1 to 17; the sequence is MLGIWIVAFLFFGTSRG. The cysteines at positions 21 and 27 are disulfide-linked. N-linked (GlcNAc...) asparagine glycosylation is present at Asn-74. A disulfide bridge connects residues Cys-107 and Cys-118. Residue Asn-125 is glycosylated (N-linked (GlcNAc...) asparagine). The active-site Nucleophile is the Ser-168. Asp-191 serves as the catalytic Charge relay system. An intrachain disulfide couples Cys-252 to Cys-277. His-279 (charge relay system) is an active-site residue. 3 cysteine pairs are disulfide-bonded: Cys-301–Cys-312, Cys-315–Cys-320, and Cys-451–Cys-467. One can recognise a PLAT domain in the interval 355–467; it reads WRHKLSVKLS…PNILQNLKPC (113 aa).

Belongs to the AB hydrolase superfamily. Lipase family. As to expression, overexpressed in hepatocellular carcinoma.

Its subcellular location is the secreted. It catalyses the reaction a triacylglycerol + H2O = a diacylglycerol + a fatty acid + H(+). In Homo sapiens (Human), this protein is Pancreatic lipase-related protein 3 (PNLIPRP3).